The following is a 217-amino-acid chain: DNA helicase assembly protein (217 aa).

It belongs to the Tequatrovirus DNA helicase assembly protein family. Monomer. Homohexamer; when associated with DNA. Interacts (via C-terminus) with the DnaB-like replicative helicase (via C-terminus); this interaction brings about the rapid assembly of the helicase onto ssDNA. Interacts (via C-terminus) with the single-stranded DNA-binding protein; a ternary complex between the helicase assembly protein, the single-stranded DNA-binding protein and ssDNA is an obligatory intermediate in the helicase loading mechanism. Interacts with the viral DNA polymerase. Binds to single and double-stranded DNA. Part of the replicase complex that includes the DNA polymerase, the polymerase clamp, the clamp loader complex, the single-stranded DNA binding protein (SSB), the primase, the DnaB-like replicative helicase and the helicase assembly factor.

In terms of biological role, DNA helicase loader protein that participates in viral DNA replication, recombination, and repair. At the fork, required for loading of the replicative helicase onto DNA protected by the ssDNA-binding protein. Coordinates simultaneous synthesis of leading- and lagging-strands. The protein is DNA helicase assembly protein of Enterobacteria phage T4 (Bacteriophage T4).